Reading from the N-terminus, the 463-residue chain is Maintenance of mitochondrial morphology protein 1-2 (463 aa).

The Lumenal segment spans residues Met-1–Gly-23. Residues Leu-24–Phe-44 traverse the membrane as a helical segment. The Cytoplasmic segment spans residues Ala-45–Ser-463. The segment at Gly-72–Val-152 is disordered. Residues Arg-108–Gly-122 are compositionally biased toward polar residues. One can recognise an SMP-LTD domain in the interval Ala-205–Pro-435.

It belongs to the MMM1 family. In terms of assembly, homodimer. Component of the ER-mitochondria encounter structure (ERMES) or MDM complex, composed of MMM1, MDM10, MDM12 and MDM34. An MMM1 homodimer associates with one molecule of MDM12 on each side in a pairwise head-to-tail manner, and the SMP-LTD domains of MMM1 and MDM12 generate a continuous hydrophobic tunnel for phospholipid trafficking.

It localises to the endoplasmic reticulum membrane. Its function is as follows. Component of the ERMES/MDM complex, which serves as a molecular tether to connect the endoplasmic reticulum (ER) and mitochondria. Components of this complex are involved in the control of mitochondrial shape and protein biogenesis, and function in nonvesicular lipid trafficking between the ER and mitochondria. The MDM12-MMM1 subcomplex functions in the major beta-barrel assembly pathway that is responsible for biogenesis of all outer membrane beta-barrel proteins, and acts in a late step after the SAM complex. The MDM10-MDM12-MMM1 subcomplex further acts in the TOM40-specific pathway after the action of the MDM12-MMM1 complex. Essential for establishing and maintaining the structure of mitochondria and maintenance of mtDNA nucleoids. The sequence is that of Maintenance of mitochondrial morphology protein 1-2 from Yarrowia lipolytica (strain CLIB 122 / E 150) (Yeast).